A 434-amino-acid chain; its full sequence is MRRATYAFALLAILVLGVVASGCIGGGTTTPTQTSPATQPTTTQTPTQTETQAVECGSGKVVIWHAMQPNELEVFQSLAEEYMALCPEVEIVFEQKPNLEDALKAAIPTGQGPDLFIWAHDWIGKFAEAGLLEPIDEYVTEDLLNEFAPMAQDAMQYKGHYYALPFAAETVAIIYNKEMVSEPPKTFDEMKAIMEKYYDPANEKYGIAWPINAYFISAIAQAFGGYYFDDKTEQPGLDKPETIEGFKFFFTEIWPYMAPTGDYNTQQSIFLEGRAPMMVNGPWSINDVKKAGINFGVVPLPPIIKDGKEYWPRPYGGVKLIYFAAGIKNKDAAWKFAKWLTTSEESIKTLALELGYIPVLTKVLDDPEIKNDPVIYGFGQAVQHAYLMPKSPKMSAVWGGVDGAINEILQDPQNADIEGILKKYQQEILNNMQG.

The signal sequence occupies residues Met-1–Ala-20. The interval Thr-28–Gln-52 is disordered. Positions Thr-29–Gln-52 are enriched in low complexity.

It belongs to the bacterial solute-binding protein 1 family.

Its function is as follows. Involved in an abc transport system for maltotriose. Binds maltotriose much more tightly than maltose. This chain is Maltotriose-binding protein (malE), found in Pyrococcus furiosus (strain ATCC 43587 / DSM 3638 / JCM 8422 / Vc1).